We begin with the raw amino-acid sequence, 143 residues long: Agaricus bisporus lectin (143 aa).

Residues A29, S48, G49, and N73 each contribute to the beta-D-Gal-(1-&gt;3)-alpha-D-GalNAc site. 3 residues coordinate N-acetyl-beta-D-glucosamine: T82, R103, and Y114.

The protein belongs to the fungal fruit body lectin family. Homotetramer.

Functionally, lectin that recognizes O-linked galactose-beta-1,3-N-acetylgalactosamine, a disaccharide (Thomsen-Friedenreich antigen or T-disaccharide), present on cell surface glycoproteins. Can also bind galactose-beta-1,3-N-acetylglucosamine. Does not bind monosaccharides. Can be internalized by clathrin-coated vesicles after binding to surface glycoproteins. After internalization it inhibits nuclear import of nuclear localization signal dependent proteins. Inhibits proliferation of malignant cells without cytotoxicity for normal cells. This Agaricus bisporus (White button mushroom) protein is Agaricus bisporus lectin.